The primary structure comprises 1049 residues: Dyslexia-associated protein KIAA0319-like protein (1049 aa).

The Cytoplasmic portion of the chain corresponds to 1 to 29; that stretch reads MEKRLGVKPNPASWILSGYYWQTSAKWLR. A helical membrane pass occupies residues 30–50; that stretch reads TLYLFYTCFCFSVLWLSTDAS. One can recognise an MANSC domain in the interval 49-127; it reads ASESRCQQGK…AFRTHSSNSM (79 aa). The Extracellular portion of the chain corresponds to 51 to 932; the sequence is ESRCQQGKTQ…ESNCEWSVLY (882 aa). The disordered stretch occupies residues 234–277; it reads TTDLTAELPGGPKNVSAQPEIPEGLATTPSTQQVKSSEKTQIAV. N-linked (GlcNAc...) asparagine glycosylation is found at asparagine 247, asparagine 395, and asparagine 487. 5 consecutive PKD domains span residues 310–401, 409–498, 504–594, 600–688, and 694–785; these read VVSA…VKPE, IAIV…VNKA, VANA…VQPE, QADA…VKEE, and IAKI…VKPD. Residues 933 to 953 form a helical membrane-spanning segment; sequence VIIATFVIVVALGILSWTVIC. Over 954 to 1049 the chain is Cytoplasmic; sequence CCKRQKGKPK…KARSPREEIL (96 aa). Threonine 974 bears the Phosphothreonine mark. 3 positions are modified to phosphoserine: serine 978, serine 1009, and serine 1031. The segment at 1022 to 1049 is disordered; it reads GKLLHGQNGSVPNGQTPLKARSPREEIL. Polar residues predominate over residues 1028-1037; that stretch reads QNGSVPNGQT. Residue threonine 1037 is modified to Phosphothreonine.

In terms of assembly, interacts with RTN4R. In terms of processing, N-glycosylated.

It localises to the cytoplasmic granule membrane. The protein resides in the golgi apparatus membrane. It is found in the golgi apparatus. Its subcellular location is the trans-Golgi network membrane. The protein localises to the cell membrane. Functionally, possible role in axon guidance through interaction with RTN4R. This chain is Dyslexia-associated protein KIAA0319-like protein, found in Pongo abelii (Sumatran orangutan).